The chain runs to 206 residues: Small ribosomal subunit protein uS4 (206 aa).

An S4 RNA-binding domain is found at 96–156 (GRLDNVVYRM…EKSKKQARIK (61 aa)).

The protein belongs to the universal ribosomal protein uS4 family. As to quaternary structure, part of the 30S ribosomal subunit. Contacts protein S5. The interaction surface between S4 and S5 is involved in control of translational fidelity.

Its function is as follows. One of the primary rRNA binding proteins, it binds directly to 16S rRNA where it nucleates assembly of the body of the 30S subunit. Functionally, with S5 and S12 plays an important role in translational accuracy. The polypeptide is Small ribosomal subunit protein uS4 (Mannheimia succiniciproducens (strain KCTC 0769BP / MBEL55E)).